Consider the following 718-residue polypeptide: Ribosomal RNA large subunit methyltransferase K/L (718 aa).

Positions Asp-44–Leu-155 constitute a THUMP domain.

This sequence belongs to the methyltransferase superfamily. RlmKL family.

The protein resides in the cytoplasm. It catalyses the reaction guanosine(2445) in 23S rRNA + S-adenosyl-L-methionine = N(2)-methylguanosine(2445) in 23S rRNA + S-adenosyl-L-homocysteine + H(+). The catalysed reaction is guanosine(2069) in 23S rRNA + S-adenosyl-L-methionine = N(2)-methylguanosine(2069) in 23S rRNA + S-adenosyl-L-homocysteine + H(+). In terms of biological role, specifically methylates the guanine in position 2445 (m2G2445) and the guanine in position 2069 (m7G2069) of 23S rRNA. The protein is Ribosomal RNA large subunit methyltransferase K/L of Francisella tularensis subsp. novicida (strain U112).